The chain runs to 307 residues: Aspartate carbamoyltransferase catalytic subunit (307 aa).

The carbamoyl phosphate site is built by arginine 58 and threonine 59. Lysine 86 is a binding site for L-aspartate. Carbamoyl phosphate is bound by residues arginine 108, histidine 138, and glutamine 141. The L-aspartate site is built by arginine 171 and arginine 223. Residues alanine 264 and proline 265 each contribute to the carbamoyl phosphate site.

This sequence belongs to the aspartate/ornithine carbamoyltransferase superfamily. ATCase family. In terms of assembly, heterododecamer (2C3:3R2) of six catalytic PyrB chains organized as two trimers (C3), and six regulatory PyrI chains organized as three dimers (R2).

It carries out the reaction carbamoyl phosphate + L-aspartate = N-carbamoyl-L-aspartate + phosphate + H(+). It functions in the pathway pyrimidine metabolism; UMP biosynthesis via de novo pathway; (S)-dihydroorotate from bicarbonate: step 2/3. Its function is as follows. Catalyzes the condensation of carbamoyl phosphate and aspartate to form carbamoyl aspartate and inorganic phosphate, the committed step in the de novo pyrimidine nucleotide biosynthesis pathway. The protein is Aspartate carbamoyltransferase catalytic subunit of Streptococcus suis (strain 98HAH33).